The primary structure comprises 391 residues: Trehalose-phosphate phosphatase (391 aa).

Residue Asp-147 is the Nucleophile of the active site. Residues Asp-147, Asp-149, and Asp-330 each coordinate Mg(2+). Asp-147–Asp-149 serves as a coordination point for substrate.

The protein belongs to the trehalose phosphatase family. The cofactor is Mg(2+).

It catalyses the reaction alpha,alpha-trehalose 6-phosphate + H2O = alpha,alpha-trehalose + phosphate. The protein operates within glycan biosynthesis; trehalose biosynthesis. Its function is as follows. Removes the phosphate from trehalose 6-phosphate to produce free trehalose. The polypeptide is Trehalose-phosphate phosphatase (otsB) (Mycobacterium avium (strain 104)).